Consider the following 659-residue polypeptide: Methionine--tRNA ligase (659 aa).

The 'HIGH' region motif lies at Tyr13–His23. A 'KMSKS' region motif is present at residues Lys308–Ser312. An ATP-binding site is contributed by Lys311. The region spanning Asp559 to Lys659 is the tRNA-binding domain.

It belongs to the class-I aminoacyl-tRNA synthetase family. MetG type 2B subfamily. As to quaternary structure, homodimer.

The protein resides in the cytoplasm. It carries out the reaction tRNA(Met) + L-methionine + ATP = L-methionyl-tRNA(Met) + AMP + diphosphate. Its function is as follows. Is required not only for elongation of protein synthesis but also for the initiation of all mRNA translation through initiator tRNA(fMet) aminoacylation. The polypeptide is Methionine--tRNA ligase (Staphylococcus haemolyticus (strain JCSC1435)).